A 622-amino-acid chain; its full sequence is Mitochondrial distribution and morphology protein 34 (622 aa).

Residues 1-204 form the SMP-LTD domain; sequence MSFKVNWNSL…LPTLIHQLSL (204 aa). 2 disordered regions span residues 362–399 and 568–592; these read YSNK…PSEL and FDGG…TRNE. Residues 370 to 384 show a composition bias toward basic residues; it reads KPKRRRIKVHKKNKS. Residues 390–399 are compositionally biased toward polar residues; the sequence is TTTTSKPSEL. Low complexity predominate over residues 571–583; that stretch reads GKNNNTNDNNSKN.

Belongs to the MDM34 family. In terms of assembly, component of the ER-mitochondria encounter structure (ERMES) or MDM complex, composed of MMM1, MDM10, MDM12 and MDM34.

Its subcellular location is the mitochondrion outer membrane. Its function is as follows. Component of the ERMES/MDM complex, which serves as a molecular tether to connect the endoplasmic reticulum (ER) and mitochondria. Components of this complex are involved in the control of mitochondrial shape and protein biogenesis, and function in nonvesicular lipid trafficking between the ER and mitochondria. MDM34 is required for the interaction of the ER-resident membrane protein MMM1 and the outer mitochondrial membrane-resident beta-barrel protein MDM10. The chain is Mitochondrial distribution and morphology protein 34 from Candida dubliniensis (strain CD36 / ATCC MYA-646 / CBS 7987 / NCPF 3949 / NRRL Y-17841) (Yeast).